Consider the following 220-residue polypeptide: HTH-type transcriptional repressor KstR (220 aa).

One can recognise an HTH tetR-type domain in the interval 36-96; it reads RERRKRILDA…SALGREFSRI (61 aa). Positions 59 to 78 form a DNA-binding region, H-T-H motif; sequence QMRAVADRADVAVGTLYRYF.

Homodimer.

Its function is as follows. Controls the expression of genes used for utilizing diverse lipids as energy sources. This Mycobacterium tuberculosis (strain ATCC 25618 / H37Rv) protein is HTH-type transcriptional repressor KstR (kstR).